We begin with the raw amino-acid sequence, 459 residues long: tRNA modification GTPase MnmE (459 aa).

The (6S)-5-formyl-5,6,7,8-tetrahydrofolate site is built by Arg25, Glu87, and Arg126. Residues 221-380 (GLKVAIVGRP…LETAILEIVQ (160 aa)) form the TrmE-type G domain. Residue Asn231 participates in K(+) binding. Residues 231–236 (NVGKSS), 250–256 (TDLPGTT), and 275–278 (DTAG) contribute to the GTP site. Mg(2+) is bound at residue Ser235. The K(+) site is built by Thr250, Leu252, and Thr255. A Mg(2+)-binding site is contributed by Thr256. Lys459 is a binding site for (6S)-5-formyl-5,6,7,8-tetrahydrofolate.

It belongs to the TRAFAC class TrmE-Era-EngA-EngB-Septin-like GTPase superfamily. TrmE GTPase family. As to quaternary structure, homodimer. Heterotetramer of two MnmE and two MnmG subunits. Requires K(+) as cofactor.

The protein resides in the cytoplasm. In terms of biological role, exhibits a very high intrinsic GTPase hydrolysis rate. Involved in the addition of a carboxymethylaminomethyl (cmnm) group at the wobble position (U34) of certain tRNAs, forming tRNA-cmnm(5)s(2)U34. This Nostoc sp. (strain PCC 7120 / SAG 25.82 / UTEX 2576) protein is tRNA modification GTPase MnmE.